A 370-amino-acid polypeptide reads, in one-letter code: MPHQQILMLFGLLPVATNISTWWNFGSMLLACLTLQLLTGFFLAVHYTANINLAFSSIIHITRDVPYGWMMQNLHAIGASMFFICIYIHIARGLYYGSYLNKETWFSGTTLLIMLMATAFFGYVLPWGQMSFWAATVITNLLTAIPYLGSTMTTWLWGGFAINDPTLTRFFALHFILPFGIISLSSLHILLLHEEGSSNPLGTNSDIDKIPFHPYQTYKDMLMLTIMTIMLLTIVSFFPDIFNDPDSFSKANPLVTPQHIKPEWYFLFXYGILRSIPNKLGGALALTMSIMMLLTLPFTHTSKLRSMMFRPFMQLTFWTFTATFLVISWTATKPVEPPFTTISQVAALMYFLFFISNPIMGWLENKIMKL.

The next 4 membrane-spanning stretches (helical) occupy residues 25-45 (FGSMLLACLTLQLLTGFFLAV), 69-90 (WMMQNLHAIGASMFFICIYIHI), 105-125 (WFSGTTLLIMLMATAFFGYVL), and 170-190 (FFALHFILPFGIISLSSLHIL). Residues His75 and His89 each contribute to the heme b site. The heme b site is built by His174 and His188. His193 contributes to the a ubiquinone binding site. The next 4 membrane-spanning stretches (helical) occupy residues 218 to 238 (YKDMLMLTIMTIMLLTIVSFF), 280 to 300 (LGGALALTMSIMMLLTLPFTH), 312 to 332 (FMQLTFWTFTATFLVISWTAT), and 339 to 358 (FTTISQVAALMYFLFFISNP).

The protein belongs to the cytochrome b family. As to quaternary structure, the cytochrome bc1 complex contains 3 respiratory subunits (MT-CYB, CYC1 and UQCRFS1), 2 core proteins (UQCRC1 and UQCRC2) and probably 6 low-molecular weight proteins. Heme b serves as cofactor.

It is found in the mitochondrion inner membrane. Functionally, component of the ubiquinol-cytochrome c reductase complex (complex III or cytochrome b-c1 complex) that is part of the mitochondrial respiratory chain. The b-c1 complex mediates electron transfer from ubiquinol to cytochrome c. Contributes to the generation of a proton gradient across the mitochondrial membrane that is then used for ATP synthesis. This Chilabothrus strigilatus mccraniei (Ragged Island boa constrictor) protein is Cytochrome b (MT-CYB).